The chain runs to 648 residues: DNA ligase (648 aa).

NAD(+) is bound by residues aspartate 30–aspartate 34 and serine 79–glutamine 80. The active-site N6-AMP-lysine intermediate is lysine 110. Residues arginine 131, glutamate 165, lysine 280, and lysine 304 each contribute to the NAD(+) site. Cysteine 398, cysteine 401, cysteine 414, and cysteine 419 together coordinate Zn(2+). The BRCT domain occupies valine 573–phenylalanine 648.

Belongs to the NAD-dependent DNA ligase family. LigA subfamily. Mg(2+) is required as a cofactor. The cofactor is Mn(2+).

It catalyses the reaction NAD(+) + (deoxyribonucleotide)n-3'-hydroxyl + 5'-phospho-(deoxyribonucleotide)m = (deoxyribonucleotide)n+m + AMP + beta-nicotinamide D-nucleotide.. DNA ligase that catalyzes the formation of phosphodiester linkages between 5'-phosphoryl and 3'-hydroxyl groups in double-stranded DNA using NAD as a coenzyme and as the energy source for the reaction. It is essential for DNA replication and repair of damaged DNA. This is DNA ligase from Aliarcobacter butzleri (strain RM4018) (Arcobacter butzleri).